The primary structure comprises 93 residues: Small ribosomal subunit protein uS19c (93 aa).

This sequence belongs to the universal ribosomal protein uS19 family.

It localises to the plastid. It is found in the chloroplast. In terms of biological role, protein S19 forms a complex with S13 that binds strongly to the 16S ribosomal RNA. The polypeptide is Small ribosomal subunit protein uS19c (Oryza nivara (Indian wild rice)).